Here is a 338-residue protein sequence, read N- to C-terminus: ATP synthase subunit a (338 aa).

A helical membrane pass occupies residues 15 to 35 (IAVLVMPLLLGFGAPIYAAAE). The interval 45–66 (AAAVHTDEAHGEAGEHAEGGHG) is disordered. Basic and acidic residues predominate over residues 49-65 (HTDEAHGEAGEHAEGGH). 7 helical membrane-spanning segments follow: residues 109–129 (HVVF…YVGN), 174–194 (LLTV…PYGA), 199–219 (NINV…VSAI), 238–258 (ALWI…PFAL), 262–282 (LFAN…ISFI), 287–307 (IVAI…EIFV), and 308–328 (SFLQ…LGSA).

It belongs to the ATPase A chain family. As to quaternary structure, F-type ATPases have 2 components, CF(1) - the catalytic core - and CF(0) - the membrane proton channel. CF(1) has five subunits: alpha(3), beta(3), gamma(1), delta(1), epsilon(1). CF(0) has four main subunits: a, b, b' and c.

It is found in the cell inner membrane. Functionally, key component of the proton channel; it plays a direct role in the translocation of protons across the membrane. The chain is ATP synthase subunit a from Chlorobium phaeobacteroides (strain BS1).